Consider the following 318-residue polypeptide: Ribokinase (318 aa).

Substrate-binding positions include 12 to 14 (NWD), 40 to 44 (GKAAN), and Glu-141. ATP-binding positions include Asn-188 and 235–240 (TLGGNG). K(+)-binding residues include Asp-264 and Ser-266. 269 to 270 (GD) is an ATP binding site. Position 270 (Asp-270) interacts with substrate. The Proton acceptor role is filled by Asp-270. 4 residues coordinate K(+): Ser-301, Arg-304, Gly-306, and Ser-310.

Belongs to the carbohydrate kinase PfkB family. Ribokinase subfamily. In terms of assembly, homodimer. It depends on Mg(2+) as a cofactor.

The protein localises to the cytoplasm. It localises to the nucleus. It catalyses the reaction D-ribose + ATP = D-ribose 5-phosphate + ADP + H(+). It participates in carbohydrate metabolism; D-ribose degradation; D-ribose 5-phosphate from beta-D-ribopyranose: step 2/2. Its activity is regulated as follows. Activated by a monovalent cation that binds near, but not in, the active site. The most likely occupant of the site in vivo is potassium. Ion binding induces a conformational change that may alter substrate affinity. In terms of biological role, catalyzes the phosphorylation of ribose at O-5 in a reaction requiring ATP and magnesium. The resulting D-ribose-5-phosphate can then be used either for sythesis of nucleotides, histidine, and tryptophan, or as a component of the pentose phosphate pathway. The polypeptide is Ribokinase (rbsk) (Dictyostelium discoideum (Social amoeba)).